We begin with the raw amino-acid sequence, 139 residues long: MKKGTVLNSEISSVISRLGHTDTLVVCDAGLPVPHSTTRIDMALTQGVPSFMQVLDVVTAEMQVETAILATEIKQHNPQLHETLLGHIEQLQQHQGNTIEIRYTTHEQFKQQTADSQAVIRSGECSPYANIILCAGVTF.

Catalysis depends on histidine 20, which acts as the Proton donor. Residues aspartate 28, histidine 106, and 128–130 (YAN) each bind substrate.

It belongs to the RbsD / FucU family. RbsD subfamily. Homodecamer.

It localises to the cytoplasm. The catalysed reaction is beta-D-ribopyranose = beta-D-ribofuranose. The protein operates within carbohydrate metabolism; D-ribose degradation; D-ribose 5-phosphate from beta-D-ribopyranose: step 1/2. Its function is as follows. Catalyzes the interconversion of beta-pyran and beta-furan forms of D-ribose. In Enterobacter sp. (strain 638), this protein is D-ribose pyranase.